The chain runs to 229 residues: DNA repair protein RecO (229 aa).

This sequence belongs to the RecO family.

Its function is as follows. Involved in DNA repair and RecF pathway recombination. This is DNA repair protein RecO from Legionella pneumophila (strain Lens).